Here is a 509-residue protein sequence, read N- to C-terminus: ATP synthase subunit alpha (509 aa).

169-176 (GDRQTGKT) serves as a coordination point for ATP.

It belongs to the ATPase alpha/beta chains family. In terms of assembly, F-type ATPases have 2 components, CF(1) - the catalytic core - and CF(0) - the membrane proton channel. CF(1) has five subunits: alpha(3), beta(3), gamma(1), delta(1), epsilon(1). CF(0) has three main subunits: a(1), b(2) and c(9-12). The alpha and beta chains form an alternating ring which encloses part of the gamma chain. CF(1) is attached to CF(0) by a central stalk formed by the gamma and epsilon chains, while a peripheral stalk is formed by the delta and b chains.

The protein localises to the cell inner membrane. The catalysed reaction is ATP + H2O + 4 H(+)(in) = ADP + phosphate + 5 H(+)(out). Produces ATP from ADP in the presence of a proton gradient across the membrane. The alpha chain is a regulatory subunit. The sequence is that of ATP synthase subunit alpha from Novosphingobium aromaticivorans (strain ATCC 700278 / DSM 12444 / CCUG 56034 / CIP 105152 / NBRC 16084 / F199).